A 261-amino-acid chain; its full sequence is THO complex subunit THP2 (261 aa).

In terms of assembly, component of the THO complex, which is composed of HPR1, MFT1, THO2 and THP2. Together with SUB2, TEX1 and YRA1, THO forms the transcription/export (TREX) complex. THO associates with DNA and RNA in vitro.

The protein resides in the nucleus. Component the THO subcomplex of the TREX complex, which operates in coupling transcription elongation to mRNA export. The THO complex is recruited to transcribed genes and moves along the gene with the elongating polymerase during transcription. THO is important for stabilizing nascent RNA in the RNA polymerase II elongation complex by preventing formation of DNA:RNA hybrids behind the elongating polymerase. It functions in cotranscriptional formation of an export-competent messenger ribonucleoprotein particle (mRNP) by facilitating the loading of ATP-dependent RNA helicase SUB2 and the mRNA export factor YRA1 along the nascent mRNA. The chain is THO complex subunit THP2 (THP2) from Saccharomyces cerevisiae (strain ATCC 204508 / S288c) (Baker's yeast).